Consider the following 315-residue polypeptide: Cobalamin biosynthesis protein CobD (315 aa).

Transmembrane regions (helical) follow at residues 48–68 (IAGFFAWLFIVFITFGVTLGI), 77–97 (PILGTVVSGILIYFCISAKGL), 150–170 (DGIIAPLFFAGIGGAPLAFLY), 200–220 (VFNYIPARLTAYLIVISSFIL), and 295–315 (MVSFLGMVVALIIRCILEVII).

This sequence belongs to the CobD/CbiB family.

The protein localises to the cell membrane. It participates in cofactor biosynthesis; adenosylcobalamin biosynthesis. In terms of biological role, converts cobyric acid to cobinamide by the addition of aminopropanol on the F carboxylic group. The chain is Cobalamin biosynthesis protein CobD from Clostridium perfringens (strain 13 / Type A).